Here is a 441-residue protein sequence, read N- to C-terminus: Zinc finger and BTB domain-containing protein 26 (441 aa).

Positions 33 to 97 (CDVTVLIDDI…CYSGVLEFPE (65 aa)) constitute a BTB domain. Positions 134 to 177 (DSKEGCEPQSASPQSKEQQGDARGSPKQDSPCIHPSEDSMDMED) are disordered. A Glycyl lysine isopeptide (Lys-Gly) (interchain with G-Cter in SUMO2) cross-link involves residue Lys-184. The segment at 194–216 (VRSKKDQNQFISSEPTALHSSEP) is disordered. Polar residues predominate over residues 201–216 (NQFISSEPTALHSSEP). Residue Lys-255 forms a Glycyl lysine isopeptide (Lys-Gly) (interchain with G-Cter in SUMO2) linkage. C2H2-type zinc fingers lie at residues 273 to 295 (HQCPKCTRVFRHLENYANHLKMH), 298 to 320 (FMCLLCGKTFTQKGNLHRHMRVH), 326 to 348 (FQCKICGKTFSQKCSLQDHLNLH), and 354 to 377 (HKCNYCDMVFAHKPVLRKHLKQLH). Lys-329 participates in a covalent cross-link: Glycyl lysine isopeptide (Lys-Gly) (interchain with G-Cter in SUMO2).

Ubiquitous.

It localises to the nucleus. Its function is as follows. May be involved in transcriptional regulation. The polypeptide is Zinc finger and BTB domain-containing protein 26 (ZBTB26) (Homo sapiens (Human)).